The chain runs to 277 residues: Large ribosomal subunit protein uL2 (277 aa).

The tract at residues 219 to 277 is disordered; that stretch reads TVRGSVMNPNDHPHGGGEGKAPVGRKAPSTPWGKPALGLKTRNKKAKSDKLIVRRRNQK.

This sequence belongs to the universal ribosomal protein uL2 family. Part of the 50S ribosomal subunit. Forms a bridge to the 30S subunit in the 70S ribosome.

One of the primary rRNA binding proteins. Required for association of the 30S and 50S subunits to form the 70S ribosome, for tRNA binding and peptide bond formation. It has been suggested to have peptidyltransferase activity; this is somewhat controversial. Makes several contacts with the 16S rRNA in the 70S ribosome. The polypeptide is Large ribosomal subunit protein uL2 (Streptococcus suis (strain 98HAH33)).